The primary structure comprises 410 residues: Phosphoglycerate kinase (410 aa).

Residues 19 to 21 (DLN), R34, 57 to 60 (HQGK), R114, and R154 contribute to the substrate site. ATP-binding positions include E332 and 358–361 (GGHS).

It belongs to the phosphoglycerate kinase family. In terms of assembly, homodimer.

The protein resides in the cytoplasm. The catalysed reaction is (2R)-3-phosphoglycerate + ATP = (2R)-3-phospho-glyceroyl phosphate + ADP. The protein operates within carbohydrate degradation; glycolysis; pyruvate from D-glyceraldehyde 3-phosphate: step 2/5. The polypeptide is Phosphoglycerate kinase (pgk) (Pyrococcus horikoshii (strain ATCC 700860 / DSM 12428 / JCM 9974 / NBRC 100139 / OT-3)).